The primary structure comprises 126 residues: Holo-[acyl-carrier-protein] synthase (126 aa).

2 residues coordinate Mg(2+): Asp-9 and Glu-58.

This sequence belongs to the P-Pant transferase superfamily. AcpS family. Mg(2+) is required as a cofactor.

It localises to the cytoplasm. It carries out the reaction apo-[ACP] + CoA = holo-[ACP] + adenosine 3',5'-bisphosphate + H(+). Functionally, transfers the 4'-phosphopantetheine moiety from coenzyme A to a Ser of acyl-carrier-protein. The protein is Holo-[acyl-carrier-protein] synthase of Escherichia coli (strain K12 / MC4100 / BW2952).